The following is a 194-amino-acid chain: Ras-related protein Rab-22A (194 aa).

12–20 (GDTGVGKSS) is a GTP binding site. Residues 34–42 (INPTIGASF) carry the Effector region motif. GTP contacts are provided by residues 60–64 (DTAGQ), 118–121 (NKCD), and 148–150 (SAK). The segment at 170-194 (DANPASGGKGFKLRRQPSEPKRSCC) is disordered. Residues 185-194 (QPSEPKRSCC) show a composition bias toward basic and acidic residues. Residues C193 and C194 are each lipidated (S-geranylgeranyl cysteine).

The protein belongs to the small GTPase superfamily. Rab family. In terms of assembly, binds EEA1. Interacts (in its GTP-bound form) with RINL. Interacts directly with ZFYVE20. Interacts (in its GTP-bound form) with RABGEF1. Detected in brain and heart, and at lower levels in lung and spleen.

It is found in the endosome membrane. It localises to the cell membrane. The protein resides in the early endosome. Its subcellular location is the late endosome. The protein localises to the cell projection. It is found in the ruffle. It localises to the cytoplasmic vesicle. The protein resides in the phagosome. Its subcellular location is the phagosome membrane. In terms of biological role, plays a role in endocytosis and intracellular protein transport. Mediates trafficking of TF from early endosomes to recycling endosomes. Required for NGF-mediated endocytosis of NTRK1, and subsequent neurite outgrowth. Binds GTP and GDP and has low GTPase activity. Alternates between a GTP-bound active form and a GDP-bound inactive form. This chain is Ras-related protein Rab-22A (Rab22a), found in Mus musculus (Mouse).